The chain runs to 760 residues: E4 SUMO-protein ligase PIAL2 (760 aa).

The segment at 143–301 is interacting domain (IND), required for interaction with MOM1 and PIAL1; sequence IKSPGSTFSQ…GVIEASPDSD (159 aa). The segment at 298–379 adopts an SP-RING-type zinc-finger fold; sequence PDSDIIEGPS…MAKILKDVEH (82 aa). Zn(2+) is bound by residues C329, H331, C352, and C355. Positions 440–450 are enriched in basic and acidic residues; sequence GDNKVEDRKPC. Disordered stretches follow at residues 440 to 471, 492 to 522, 631 to 657, and 699 to 760; these read GDNK…SNDD, LGNT…MSID, GVRG…SVSR, and SQQS…GPTS. Composition is skewed to polar residues over residues 492-518, 631-653, and 699-729; these read LGNT…SQIP, GVRG…PTVQ, and SQQS…SPFT.

It belongs to the PIAL protein ligase family. As to quaternary structure, homodimer. Interacts with MOM1 and PIAL1 to form a high molecular mass complex which mediates transcriptional silencing at heterochromatin regions. In terms of tissue distribution, expressed in leaves, stems and flowers, and, at low levels, in siliques and old leaves.

The protein resides in the nucleus. It functions in the pathway protein modification; protein sumoylation. Together with MOM1 and PIAL1, regulates transcriptional gene silencing (TGS) independently of changes in DNA methylation. E4-type SUMO ligase that promotes SUMO chain formation in a SCE1-dependent manner and thus contributes to a pathway for proteolytic removal of sumoylation substrates. Involved in stress responses and sulfur metabolism. The chain is E4 SUMO-protein ligase PIAL2 from Arabidopsis thaliana (Mouse-ear cress).